We begin with the raw amino-acid sequence, 79 residues long: Beta-defensin 15 (79 aa).

The signal sequence occupies residues 1–20 (MKTFLFLFAVLFFLDPAKNA). Intrachain disulfides connect cysteine 26–cysteine 53, cysteine 33–cysteine 47, and cysteine 37–cysteine 54.

It belongs to the beta-defensin family. As to expression, expressed in testis and to a lesser extent in epididymis (caput, corpus and cauda). Also weakly expressed in kidneys and colon.

It localises to the secreted. Functionally, has antibacterial activity. This chain is Beta-defensin 15 (Defb15), found in Mus musculus (Mouse).